We begin with the raw amino-acid sequence, 152 residues long: Aminoglycoside N(6')-acetyltransferase type 1 (152 aa).

The 148-residue stretch at 5-152 folds into the N-acetyltransferase domain; the sequence is PLVRPVETTD…AQVRCFRKPL (148 aa). Substrate contacts are provided by Trp-26, Tyr-73, Glu-86, and Asp-122. Asn-127 is an acetyl-CoA binding site.

In terms of assembly, homodimer.

The enzyme catalyses kanamycin B + acetyl-CoA = N(6')-acetylkanamycin B + CoA + H(+). Its function is as follows. Catalyzes the transfer of an acetyl group from acetyl-CoA to the 6'-amino group of aminoglycoside molecules conferring resistance to antibiotics containing the purpurosamine ring including amikacin. This Klebsiella aerogenes (Enterobacter aerogenes) protein is Aminoglycoside N(6')-acetyltransferase type 1 (aacA7).